Here is a 407-residue protein sequence, read N- to C-terminus: RNA-binding motif, single-stranded-interacting protein 2 (407 aa).

Met1 carries the N-acetylmethionine modification. Residues 14–51 (FGYNKNNKKPYVSLSQQMAPPSPSSSTPNSSSGSTAHD) form a disordered region. Positions 37–47 (SSSTPNSSSGS) are enriched in low complexity. RRM domains are found at residues 56-129 (TNLY…MAKQ) and 135-220 (TNLY…FADG). Ser106 carries the post-translational modification Phosphoserine. A phosphoserine mark is found at Ser280 and Ser285. A compositionally biased stretch (low complexity) spans 374–392 (PSSSVSVEESGSQQSQVPV). The disordered stretch occupies residues 374–398 (PSSSVSVEESGSQQSQVPVDAPSEH).

The protein resides in the nucleus. The protein is RNA-binding motif, single-stranded-interacting protein 2 (RBMS2) of Bos taurus (Bovine).